Reading from the N-terminus, the 249-residue chain is MAPSRKFFVGGNWKMNGRKKNLGELITTLNAAKVPADTEVVCAPPTAYIDFARQKLDAKIAVAAQNCYKVTNGAFTGEISPGMIKDCGATWVVLGHSERRHVFGESDELIGQKVAHALAEGLGVIACIGEKLDEREAGITEKVVFEQTKVIADNVKDWSKVVLAYEPVWAIGTGKTATPQQAQEVHEKLRGWLKSNVSDAVAQSTRIIYGGSVTGATCKELASQPDVDGFLVGGASLKPEFVDIINAKQ.

Residues Asn-12 and Lys-14 each contribute to the substrate site. Position 14 is an N6-acetyllysine (Lys-14). 3'-nitrotyrosine is present on Tyr-68. At Ser-80 the chain carries Phosphoserine. Catalysis depends on His-96, which acts as the Electrophile. Ser-106 carries the phosphoserine modification. Residue Lys-142 forms a Glycyl lysine isopeptide (Lys-Gly) (interchain with G-Cter in SUMO1) linkage. Lys-149 carries the N6-succinyllysine modification. The residue at position 156 (Lys-156) is an N6-acetyllysine; alternate. At Lys-156 the chain carries N6-succinyllysine; alternate. At Ser-159 the chain carries Phosphoserine. The Proton acceptor role is filled by Glu-166. Thr-173 is subject to Phosphothreonine. At Lys-194 the chain carries N6-acetyllysine; alternate. Lys-194 is subject to N6-succinyllysine; alternate. Lys-194 bears the N6-methyllysine; alternate mark. Position 198 is a phosphoserine (Ser-198). Tyr-209 is modified (3'-nitrotyrosine). Phosphoserine is present on Ser-212. The residue at position 214 (Thr-214) is a Phosphothreonine. The residue at position 223 (Ser-223) is a Phosphoserine. Lys-238 is subject to N6-acetyllysine.

This sequence belongs to the triosephosphate isomerase family. As to quaternary structure, homodimer.

It is found in the cytoplasm. The enzyme catalyses dihydroxyacetone phosphate = methylglyoxal + phosphate. The catalysed reaction is D-glyceraldehyde 3-phosphate = dihydroxyacetone phosphate. It participates in carbohydrate degradation; glycolysis; D-glyceraldehyde 3-phosphate from glycerone phosphate: step 1/1. The protein operates within carbohydrate biosynthesis; gluconeogenesis. In terms of biological role, triosephosphate isomerase is an extremely efficient metabolic enzyme that catalyzes the interconversion between dihydroxyacetone phosphate (DHAP) and D-glyceraldehyde-3-phosphate (G3P) in glycolysis and gluconeogenesis. It is also responsible for the non-negligible production of methylglyoxal a reactive cytotoxic side-product that modifies and can alter proteins, DNA and lipids. This chain is Triosephosphate isomerase (TPI1), found in Canis lupus familiaris (Dog).